Here is a 218-residue protein sequence, read N- to C-terminus: Suppressor of silencing P0 (218 aa).

The F-box-like domain maps to 63–67; sequence LPLHL.

Belongs to the polerovirus P0 protein family. Interacts (via F-box-like domain) with host AGO1; this interaction targets AGO1 for degradation, and thereby suppresses the silencing function of the latter. Interacts (via F-box-like domain) with host ASK1 and ASK2 (SKP proteins); these interactions are essential for viral pathogenicity. Part of a SCF P0 complex composed of P0 and the host proteins SKP and CUL1.

Functionally, suppressor of RNA-mediated gene silencing, also known as post-transcriptional gene silencing (PTGS), a mechanism of plant viral defense that limits the accumulation of viral RNAs. The P0 protein suppresses local PTGS using its F-box-like domain to mediate destabilization and degradation of the AGO1 protein. The protein is Suppressor of silencing P0 of Beet western yellows virus (isolate GB1) (BWYV).